The chain runs to 233 residues: Biosynthetic peptidoglycan transglycosylase (233 aa).

A helical transmembrane segment spans residues 7-27 (VFTWLAKLVLGLFFASILSVV).

Belongs to the glycosyltransferase 51 family.

The protein localises to the cell inner membrane. The catalysed reaction is [GlcNAc-(1-&gt;4)-Mur2Ac(oyl-L-Ala-gamma-D-Glu-L-Lys-D-Ala-D-Ala)](n)-di-trans,octa-cis-undecaprenyl diphosphate + beta-D-GlcNAc-(1-&gt;4)-Mur2Ac(oyl-L-Ala-gamma-D-Glu-L-Lys-D-Ala-D-Ala)-di-trans,octa-cis-undecaprenyl diphosphate = [GlcNAc-(1-&gt;4)-Mur2Ac(oyl-L-Ala-gamma-D-Glu-L-Lys-D-Ala-D-Ala)](n+1)-di-trans,octa-cis-undecaprenyl diphosphate + di-trans,octa-cis-undecaprenyl diphosphate + H(+). It participates in cell wall biogenesis; peptidoglycan biosynthesis. In terms of biological role, peptidoglycan polymerase that catalyzes glycan chain elongation from lipid-linked precursors. The sequence is that of Biosynthetic peptidoglycan transglycosylase from Shewanella oneidensis (strain ATCC 700550 / JCM 31522 / CIP 106686 / LMG 19005 / NCIMB 14063 / MR-1).